The following is a 105-amino-acid chain: Intermembrane phospholipid transport system binding protein MlaB (105 aa).

Residues 4–105 (WDLQKNNDKI…GLSDWIANFI (102 aa)) enclose the STAS domain.

As to quaternary structure, the complex is composed of two ATP-binding proteins (MlaF), two transmembrane proteins (MlaE), two cytoplasmic solute-binding proteins (MlaB) and six periplasmic solute-binding proteins (MlaD).

The protein resides in the cytoplasm. Its function is as follows. Part of the ABC transporter complex MlaFEDB, which is involved in a phospholipid transport pathway that maintains lipid asymmetry in the outer membrane by retrograde trafficking of phospholipids from the outer membrane to the inner membrane. MlaB plays critical roles in both the assembly and activity of the complex. May act by modulating MlaF structure and stability. In Haemophilus influenzae (strain ATCC 51907 / DSM 11121 / KW20 / Rd), this protein is Intermembrane phospholipid transport system binding protein MlaB.